We begin with the raw amino-acid sequence, 1405 residues long: DNA-directed RNA polymerase subunit beta' (1405 aa).

Residues Cys71, Cys73, Cys86, and Cys89 each contribute to the Zn(2+) site. Positions 462, 464, and 466 each coordinate Mg(2+). Zn(2+) contacts are provided by Cys820, Cys893, Cys900, and Cys903.

This sequence belongs to the RNA polymerase beta' chain family. In terms of assembly, the RNAP catalytic core consists of 2 alpha, 1 beta, 1 beta' and 1 omega subunit. When a sigma factor is associated with the core the holoenzyme is formed, which can initiate transcription. It depends on Mg(2+) as a cofactor. Zn(2+) is required as a cofactor.

It carries out the reaction RNA(n) + a ribonucleoside 5'-triphosphate = RNA(n+1) + diphosphate. In terms of biological role, DNA-dependent RNA polymerase catalyzes the transcription of DNA into RNA using the four ribonucleoside triphosphates as substrates. The polypeptide is DNA-directed RNA polymerase subunit beta' (Methylorubrum populi (strain ATCC BAA-705 / NCIMB 13946 / BJ001) (Methylobacterium populi)).